A 197-amino-acid chain; its full sequence is Protein FAM219B (197 aa).

Disordered regions lie at residues 1-77 (MATE…HRDH) and 117-142 (DENL…YSSA). 3 positions are modified to phosphoserine: S14, S125, and S127.

It belongs to the FAM219 family.

In Mus musculus (Mouse), this protein is Protein FAM219B (Fam219b).